Here is a 1443-residue protein sequence, read N- to C-terminus: ARF guanine-nucleotide exchange factor GNL1 (1443 aa).

The 190-residue stretch at 554-743 folds into the SEC7 domain; sequence FVRKVKHIKK…SEIYHSIRHS (190 aa). E658 is a catalytic residue. Disordered regions lie at residues 917 to 949 and 1424 to 1443; these read DDPELSTSNLEQEKPSANPVPVVSQSQPSAMPR and DQFQRRNAKPEDPPVPGNEV. Residues 939–949 are compositionally biased toward polar residues; it reads VSQSQPSAMPR. Basic and acidic residues predominate over residues 1425-1435; it reads QFQRRNAKPED.

In terms of assembly, homodimer.

The protein localises to the cytoplasm. It localises to the cytosol. The protein resides in the golgi apparatus membrane. Activates the ARF proteins by exchanging bound GDP for free GTP. Plays a role in vesicular protein sorting. Acts as the major regulator of retrograde Golgi to endoplasmic reticulum trafficking but is also involved in the endocytosis process. Could function redundantly with GNOM. Regulates vesicle trafficking required for the coordinated polar localization of auxin efflux carriers which in turn determines the direction of auxin flow. Mediates the endocytosis of PIN2 from plasma membrane to endosomal compartments. Required for maintenance of endoplasmic reticulum morphology. The chain is ARF guanine-nucleotide exchange factor GNL1 (GNL1) from Arabidopsis thaliana (Mouse-ear cress).